The chain runs to 88 residues: Large ribosomal subunit protein bL27 (88 aa).

It belongs to the bacterial ribosomal protein bL27 family.

The sequence is that of Large ribosomal subunit protein bL27 from Acidobacterium capsulatum (strain ATCC 51196 / DSM 11244 / BCRC 80197 / JCM 7670 / NBRC 15755 / NCIMB 13165 / 161).